The following is a 343-amino-acid chain: MGSADDRRFEVLRAIVADFVATKEPIGSKTLVERHNLGVSSATVRNDMAVLEAEGYITQPHTSSGRVPTEKGYREFVDRIDNVKPLSSSERRAILNFLESGVDLDDVLRRAVRLLAQLTRQVAIVQYPTLSTSSVRHLEVVALTPARLLLVVITDTGRVDQRIVELGDAIDEHELSKLRDMLGQAMEGKPLAQASIAVSDLASHLNGSDRLGDAVGRAATVLVETLVEHTEERLLLGGTANLTRNTADFGGSLRSVLEALEEQVVVLRLLAAQQEAGKVTVRIGHETEAEQMAGASVVSTAYGSSGKVYGGMGVVGPTRMDYPGTIANVAAVALYIGEVLGSR.

Belongs to the HrcA family.

Functionally, negative regulator of class I heat shock genes (grpE-dnaK-dnaJ and groELS operons). Prevents heat-shock induction of these operons. The protein is Heat-inducible transcription repressor HrcA of Mycolicibacterium smegmatis (strain ATCC 700084 / mc(2)155) (Mycobacterium smegmatis).